The primary structure comprises 94 residues: Pyrimidine/purine nucleoside phosphorylase (94 aa).

It belongs to the nucleoside phosphorylase PpnP family.

The catalysed reaction is a purine D-ribonucleoside + phosphate = a purine nucleobase + alpha-D-ribose 1-phosphate. It catalyses the reaction adenosine + phosphate = alpha-D-ribose 1-phosphate + adenine. It carries out the reaction cytidine + phosphate = cytosine + alpha-D-ribose 1-phosphate. The enzyme catalyses guanosine + phosphate = alpha-D-ribose 1-phosphate + guanine. The catalysed reaction is inosine + phosphate = alpha-D-ribose 1-phosphate + hypoxanthine. It catalyses the reaction thymidine + phosphate = 2-deoxy-alpha-D-ribose 1-phosphate + thymine. It carries out the reaction uridine + phosphate = alpha-D-ribose 1-phosphate + uracil. The enzyme catalyses xanthosine + phosphate = alpha-D-ribose 1-phosphate + xanthine. In terms of biological role, catalyzes the phosphorolysis of diverse nucleosides, yielding D-ribose 1-phosphate and the respective free bases. Can use uridine, adenosine, guanosine, cytidine, thymidine, inosine and xanthosine as substrates. Also catalyzes the reverse reactions. In Pseudomonas putida (strain GB-1), this protein is Pyrimidine/purine nucleoside phosphorylase.